A 183-amino-acid chain; its full sequence is uncharacterized protein (183 aa).

Residue Lys21 forms a Glycyl lysine isopeptide (Lys-Gly) (interchain with G-Cter in ubiquitin) linkage. 2 disordered regions span residues Asn24–Asn111 and Pro160–Pro183. Low complexity predominate over residues Gln99–Gln108. The segment covering Leu170–Pro183 has biased composition (polar residues).

The protein resides in the cytoplasm. This is an uncharacterized protein from Saccharomyces cerevisiae (strain ATCC 204508 / S288c) (Baker's yeast).